The sequence spans 215 residues: Guanylate kinase (215 aa).

One can recognise a Guanylate kinase-like domain in the interval 9–187 (GTLYIVSAPS…ALDELSCLVH (179 aa)). An ATP-binding site is contributed by 16 to 23 (APSGAGKT).

Belongs to the guanylate kinase family.

Its subcellular location is the cytoplasm. The catalysed reaction is GMP + ATP = GDP + ADP. In terms of biological role, essential for recycling GMP and indirectly, cGMP. This chain is Guanylate kinase, found in Chromohalobacter salexigens (strain ATCC BAA-138 / DSM 3043 / CIP 106854 / NCIMB 13768 / 1H11).